Here is a 692-residue protein sequence, read N- to C-terminus: Polyribonucleotide nucleotidyltransferase (692 aa).

The Mg(2+) site is built by Asp-484 and Asp-490. Residues 551 to 610 (PRIITIQINPDRIRDVIGPGGKVIRALTEETGATIDIQDNGTVTIASVDGEAGAAAKRRI) enclose the KH domain. Positions 620 to 688 (DTIYDGKVAK…RQGKIKLSMK (69 aa)) constitute an S1 motif domain.

It belongs to the polyribonucleotide nucleotidyltransferase family. As to quaternary structure, component of the RNA degradosome, which is a multiprotein complex involved in RNA processing and mRNA degradation. Mg(2+) is required as a cofactor.

Its subcellular location is the cytoplasm. The enzyme catalyses RNA(n+1) + phosphate = RNA(n) + a ribonucleoside 5'-diphosphate. Functionally, involved in mRNA degradation. Catalyzes the phosphorolysis of single-stranded polyribonucleotides processively in the 3'- to 5'-direction. This chain is Polyribonucleotide nucleotidyltransferase, found in Acidithiobacillus ferrooxidans (strain ATCC 53993 / BNL-5-31) (Leptospirillum ferrooxidans (ATCC 53993)).